The primary structure comprises 286 residues: 4-diphosphocytidyl-2-C-methyl-D-erythritol kinase (286 aa).

The active site involves Lys-13. Residue 101–111 (PQGAGLGGGSS) participates in ATP binding. The active site involves Asp-143.

This sequence belongs to the GHMP kinase family. IspE subfamily.

It catalyses the reaction 4-CDP-2-C-methyl-D-erythritol + ATP = 4-CDP-2-C-methyl-D-erythritol 2-phosphate + ADP + H(+). It participates in isoprenoid biosynthesis; isopentenyl diphosphate biosynthesis via DXP pathway; isopentenyl diphosphate from 1-deoxy-D-xylulose 5-phosphate: step 3/6. Catalyzes the phosphorylation of the position 2 hydroxy group of 4-diphosphocytidyl-2C-methyl-D-erythritol. The chain is 4-diphosphocytidyl-2-C-methyl-D-erythritol kinase from Idiomarina loihiensis (strain ATCC BAA-735 / DSM 15497 / L2-TR).